The sequence spans 165 residues: Protein SprT (165 aa).

A SprT-like domain is found at 20 to 163 (ENLAQANLKL…RCVHCGEPLV (144 aa)). Position 78 (histidine 78) interacts with Zn(2+). Glutamate 79 is an active-site residue. Position 82 (histidine 82) interacts with Zn(2+).

Belongs to the SprT family. Zn(2+) serves as cofactor.

The protein resides in the cytoplasm. This chain is Protein SprT, found in Salmonella arizonae (strain ATCC BAA-731 / CDC346-86 / RSK2980).